A 1095-amino-acid chain; its full sequence is DNA-directed RNA polymerase subunit beta'' (1095 aa).

Zn(2+) contacts are provided by C220, C293, C300, and C303.

Belongs to the RNA polymerase beta' chain family. RpoC2 subfamily. In terms of assembly, in plastids the minimal PEP RNA polymerase catalytic core is composed of four subunits: alpha, beta, beta', and beta''. When a (nuclear-encoded) sigma factor is associated with the core the holoenzyme is formed, which can initiate transcription. It depends on Zn(2+) as a cofactor.

The protein resides in the plastid. Its subcellular location is the chloroplast. It carries out the reaction RNA(n) + a ribonucleoside 5'-triphosphate = RNA(n+1) + diphosphate. Its function is as follows. DNA-dependent RNA polymerase catalyzes the transcription of DNA into RNA using the four ribonucleoside triphosphates as substrates. The protein is DNA-directed RNA polymerase subunit beta'' of Zygnema circumcarinatum (Green alga).